Consider the following 106-residue polypeptide: MTKQIIKGIIIERSSPLKIDELSQAVHLRREIIIEMVEHRLIEPEGSSPTSWKFDNVCLKRAKIAASFYRDLEINMPGIAIALDLLDKIEHLEQRLRTLERFENQE.

Belongs to the CbpM family.

Interacts with CbpA and inhibits both the DnaJ-like co-chaperone activity and the DNA binding activity of CbpA. Together with CbpA, modulates the activity of the DnaK chaperone system. Does not inhibit the co-chaperone activity of DnaJ. The sequence is that of Chaperone modulatory protein CbpM from Coxiella burnetii (strain CbuK_Q154) (Coxiella burnetii (strain Q154)).